The sequence spans 608 residues: Elongation factor 4 (608 aa).

Residues 11 to 193 enclose the tr-type G domain; it reads SHIRNFSIVA…AIVHKLPAPK (183 aa). GTP is bound by residues 23–28 and 140–143; these read DHGKST and NKID.

This sequence belongs to the TRAFAC class translation factor GTPase superfamily. Classic translation factor GTPase family. LepA subfamily.

It is found in the cell inner membrane. The catalysed reaction is GTP + H2O = GDP + phosphate + H(+). Its function is as follows. Required for accurate and efficient protein synthesis under certain stress conditions. May act as a fidelity factor of the translation reaction, by catalyzing a one-codon backward translocation of tRNAs on improperly translocated ribosomes. Back-translocation proceeds from a post-translocation (POST) complex to a pre-translocation (PRE) complex, thus giving elongation factor G a second chance to translocate the tRNAs correctly. Binds to ribosomes in a GTP-dependent manner. This Rhizobium meliloti (strain 1021) (Ensifer meliloti) protein is Elongation factor 4.